The following is a 180-amino-acid chain: MRILGIDPGLRVTGFGVIDVSGHRLAYVTSGVIRTPTADLATRLGTIFQGVSTIVRDHAPDQAAIEKVFVNVNPQSTLLLGQARGAAICGLVAGGLPVAEYTALQLKQAVVGYGRATKTQMQDMVTRLLNLSGQPGSDAADALGMAICHAHGGNTLSTLGGLAPALAQKGLRVRRGRLVG.

Active-site residues include aspartate 7, glutamate 66, and aspartate 138. 3 residues coordinate Mg(2+): aspartate 7, glutamate 66, and aspartate 138.

Belongs to the RuvC family. Homodimer which binds Holliday junction (HJ) DNA. The HJ becomes 2-fold symmetrical on binding to RuvC with unstacked arms; it has a different conformation from HJ DNA in complex with RuvA. In the full resolvosome a probable DNA-RuvA(4)-RuvB(12)-RuvC(2) complex forms which resolves the HJ. Mg(2+) serves as cofactor.

It is found in the cytoplasm. The catalysed reaction is Endonucleolytic cleavage at a junction such as a reciprocal single-stranded crossover between two homologous DNA duplexes (Holliday junction).. In terms of biological role, the RuvA-RuvB-RuvC complex processes Holliday junction (HJ) DNA during genetic recombination and DNA repair. Endonuclease that resolves HJ intermediates. Cleaves cruciform DNA by making single-stranded nicks across the HJ at symmetrical positions within the homologous arms, yielding a 5'-phosphate and a 3'-hydroxyl group; requires a central core of homology in the junction. The consensus cleavage sequence is 5'-(A/T)TT(C/G)-3'. Cleavage occurs on the 3'-side of the TT dinucleotide at the point of strand exchange. HJ branch migration catalyzed by RuvA-RuvB allows RuvC to scan DNA until it finds its consensus sequence, where it cleaves and resolves the cruciform DNA. This chain is Crossover junction endodeoxyribonuclease RuvC, found in Burkholderia orbicola (strain MC0-3).